We begin with the raw amino-acid sequence, 205 residues long: Protein N-terminal glutamine amidohydrolase (205 aa).

Residues cysteine 20, histidine 74, and aspartate 90 contribute to the active site.

The protein belongs to the NTAQ1 family. Monomer.

It catalyses the reaction N-terminal L-glutaminyl-[protein] + H2O = N-terminal L-glutamyl-[protein] + NH4(+). In terms of biological role, mediates the side-chain deamidation of N-terminal glutamine residues to glutamate, an important step in N-end rule pathway of protein degradation. Conversion of the resulting N-terminal glutamine to glutamate renders the protein susceptible to arginylation, polyubiquitination and degradation as specified by the N-end rule. Does not act on substrates with internal or C-terminal glutamine and does not act on non-glutamine residues in any position. The chain is Protein N-terminal glutamine amidohydrolase (tun) from Drosophila willistoni (Fruit fly).